Consider the following 455-residue polypeptide: Asparagine--tRNA ligase (455 aa).

Belongs to the class-II aminoacyl-tRNA synthetase family. As to quaternary structure, homodimer.

The protein localises to the cytoplasm. The catalysed reaction is tRNA(Asn) + L-asparagine + ATP = L-asparaginyl-tRNA(Asn) + AMP + diphosphate + H(+). This Lawsonia intracellularis (strain PHE/MN1-00) protein is Asparagine--tRNA ligase.